The chain runs to 306 residues: Dioxygenase FrzG (306 aa).

Fe cation contacts are provided by His132, Asp134, and His216.

Belongs to the PhyH family. In terms of assembly, homodimer. It depends on Fe cation as a cofactor.

It carries out the reaction (1S,4S)-4-[(4-methoxyphenyl)methyl]-2-methyl-2,5-diazaspiro[bicyclo[3.2.1]octane-6,1'-cyclohexan]-4'-one + 2-oxoglutarate + O2 = (2S)-3-(4-methoxyphenyl)-2-[(3S)-3-(methylamino)-8-oxo-1-azaspiro[4.5]decan-1-yl]propanal + succinate + CO2. It functions in the pathway secondary metabolite biosynthesis. Functionally, dioxygenase; part of the gene cluster that mediates the biosynthesis of the alkaloid (-)-FR901483, a potent immunosuppressant that shows efficacy in animal models and a probable inhibitor of purine nucleotide biosynthesis by targeting phosphoribosylpyrophosphate amidotransferase (PPAT). Within the pathway, FrzG cleaves the C9-N10' bond to yield a conjugated iminium. FrzG is also able to catalyze the dehydrogenation between C7 and C8 which leads to a shunt product. The biosynthesis of (-)-FR901483 starts with the condensation of two L-tyrosines to yield (S,S)-dityrosyl-piperazine. This process occurs in 3 steps with the non-canonical nonribosomal peptide synthetase FrzA catalyzing the reduction of L-tyrosine into L-tyrosinal, the spontaneous condensation of 2 L-tyrosinal units, and the subsequent reduction by the NmrA-like family domain-containing oxidoreductase FrzB. The cytochrome P450 monooxygenase FrzC then performs coupling between N10 and C1' to morph the piperazine into a 1,4-diazabicyclo[3.2.1]octane spiro-fused to a 2,5-cyclohexadienone. The dienone portion is further reduced to cyclohexanone by the flavin-dependent reductase FrzD. The methyltranserases (MTs) FrzE and FrzF are then involved in the methylation at the C10' amine and the C4 phenolic oxygen, respectively. The order of the two MTs appear to be interchangeable. Cleavage of the C9-N10' bond by the dioxygenase FrzG then leads to formation of a conjugated iminium. In addition to the oxidation of C9, an additional dehydrogenation between C7 and C8 can occur to give a likely shunt product. The next biosynthetic step is the intramolecular aldol condensation catalyzed by the newly identified aldolase FrzH to yield an aza-tricyclic product with the formation of a C9-C3' bond. The short-chain dehydrogenase/reductase FrzI then produces dephospho-(-)-FR901483 that is phosphorylated at C4'-OH into (-)-FR901483 by the phosphotransferase FrzJ. The sequence is that of Dioxygenase FrzG from Cladobotryum sp.